Reading from the N-terminus, the 499-residue chain is Maturase K (499 aa).

Belongs to the intron maturase 2 family. MatK subfamily.

It is found in the plastid. It localises to the chloroplast. Its function is as follows. Usually encoded in the trnK tRNA gene intron. Probably assists in splicing its own and other chloroplast group II introns. In Gleditsia triacanthos (Common honey-locust), this protein is Maturase K.